Reading from the N-terminus, the 229-residue chain is Small ribosomal subunit protein uS3 (229 aa).

One can recognise a KH type-2 domain in the interval 39–107 (IRKFLKKELY…EVFINIKEEK (69 aa)).

Belongs to the universal ribosomal protein uS3 family. As to quaternary structure, part of the 30S ribosomal subunit. Forms a tight complex with proteins S10 and S14.

In terms of biological role, binds the lower part of the 30S subunit head. Binds mRNA in the 70S ribosome, positioning it for translation. The sequence is that of Small ribosomal subunit protein uS3 from Nitratiruptor sp. (strain SB155-2).